A 253-amino-acid chain; its full sequence is 5-oxoprolinase subunit A (253 aa).

It belongs to the LamB/PxpA family. In terms of assembly, forms a complex composed of PxpA, PxpB and PxpC.

It carries out the reaction 5-oxo-L-proline + ATP + 2 H2O = L-glutamate + ADP + phosphate + H(+). Functionally, catalyzes the cleavage of 5-oxoproline to form L-glutamate coupled to the hydrolysis of ATP to ADP and inorganic phosphate. The polypeptide is 5-oxoprolinase subunit A (Chloroflexus aurantiacus (strain ATCC 29364 / DSM 637 / Y-400-fl)).